The sequence spans 104 residues: uncharacterized protein (104 aa).

The signal sequence occupies residues 1–25; it reads MVSSFFMASTLLAISSCFNSSISRA. A helical transmembrane segment spans residues 79–99; sequence IPVVIVVEISSTLVLLLSAFL.

Its subcellular location is the membrane. This is an uncharacterized protein from Saccharomyces cerevisiae (strain ATCC 204508 / S288c) (Baker's yeast).